Reading from the N-terminus, the 613-residue chain is Ribosome-associated molecular chaperone SSB (613 aa).

The tract at residues 1–391 (MADGVFQGAI…ILTGQSTSDE (391 aa)) is nucleotide binding domain (NBD). Residues 16–18 (TTY), lysine 73, 205–207 (GGT), 271–278 (ERAKRTLS), and glycine 342 contribute to the ATP site. The interval 392-402 (TKDLLLLDVAP) is inter-domain linker. Positions 403 to 613 (LSLGVGMQGD…RVVTKAMSSR (211 aa)) are substrate binding domain (SBD). Residues 516 to 612 (SEDIEKMVNQ…KRVVTKAMSS (97 aa)) form a lid domain (SBDalpha) region. Positions 574–582 (IEAALADAL) match the Nuclear export signal motif.

Belongs to the heat shock protein 70 family. Ssb-type Hsp70 subfamily. As to quaternary structure, binds to ribosomes. Binds close to the ribosomal tunnel exit via contacts with both ribosomal proteins and rRNA. Directly interacts with nascent polypeptides. This interaction is dependent on the ribosome-associated complex (RAC). Interacts with SSE1. Interacts with FES1.

The protein resides in the cytoplasm. The enzyme catalyses ATP + H2O = ADP + phosphate + H(+). Functionally, ribosome-bound, Hsp70-type chaperone that assists in the cotranslational folding of newly synthesized proteins in the cytosol. Stimulates folding by interacting with nascent chains, binding to short, largely hydrophobic sequences exposed by unfolded proteins, thereby stabilizing longer, more slowly translated, and aggregation-prone nascent polypeptides and domains that cannot fold stably until fully synthesized. The Hsp70-protein substrate interaction depends on ATP-binding and on allosteric regulation between the NBD and the SBD. The ATP-bound state is characterized by a fast exchange rate of substrate (low affinity state), while in the ADP-bound state exchange is much slower (high affinity state). During the Hsp70 cycle, the chaperone switches between the ATP-bound state (open conformation) and the ADP-bound state (closed conformation) by major conformational rearrangements involving mainly the lid domain. Ssb cooperates with a specific Hsp40/Hsp70 co-chaperone termed the ribosome-associated complex (RAC), which stimulates the ATPase activity of the ribosome-associated pool of Ssbs and switches it to the high affinity substrate binding state. Hsp110 chaperone SSE1 and FES1 act as nucleotide exchange factors that cause substrate release. This Candida glabrata (strain ATCC 2001 / BCRC 20586 / JCM 3761 / NBRC 0622 / NRRL Y-65 / CBS 138) (Yeast) protein is Ribosome-associated molecular chaperone SSB (SSB1).